A 434-amino-acid polypeptide reads, in one-letter code: Putative neutral sphingomyelinase (434 aa).

Mg(2+) is bound at residue E83. H318 serves as the catalytic Proton acceptor. Transmembrane regions (helical) follow at residues 366-388 (IFFF…FEVF) and 392-414 (FAVL…LIGL).

This sequence belongs to the neutral sphingomyelinase family.

Its subcellular location is the membrane. The enzyme catalyses an N-(acyl)-sphingosylphosphocholine + H2O = an N-acyl-sphingoid base + phosphocholine + H(+). It carries out the reaction a sphingomyelin + H2O = phosphocholine + an N-acylsphing-4-enine + H(+). It catalyses the reaction an N-acyl-15-methylhexadecasphing-4-enine-1-phosphocholine + H2O = an N-acyl-15-methylhexadecasphing-4-enine + phosphocholine + H(+). It participates in lipid metabolism; sphingolipid metabolism. In terms of biological role, catalyzes the hydrolysis of sphingomyelin producing a ceramide (N-acyl-sphingoid base) and a phosphocholine. C.elegans contain specific sphingoid bases, which are unique or different in structure compared to the sphingoid bases found in other animals. Two examples of these distinctive compounds are: 15-methylhexadecasphinganine and 15-methylhexadecasphing-4-enine. In Caenorhabditis elegans, this protein is Putative neutral sphingomyelinase.